The sequence spans 284 residues: UPF0276 protein Ping_0944 (284 aa).

The protein belongs to the UPF0276 family.

The chain is UPF0276 protein Ping_0944 from Psychromonas ingrahamii (strain DSM 17664 / CCUG 51855 / 37).